Here is a 122-residue protein sequence, read N- to C-terminus: SLIQFETLIMKVAKKSGMFSYSAYGCYCGWGGQGQPQDPTDRCCFVHDCCYGKVTGCDPKMDIYTYSEENGDIVCGGDDPCRKAVCECDKAAAICFRDNKDTYDWKKYWRFPTKNCQESVPC.

7 cysteine pairs are disulfide-bonded: Cys26-Cys116, Cys28-Cys44, Cys43-Cys95, Cys49-Cys122, Cys50-Cys88, Cys57-Cys81, and Cys75-Cys86. Tyr27, Gly29, and Gly31 together coordinate Ca(2+). Residue His47 is part of the active site. Asp48 provides a ligand contact to Ca(2+). Asp89 is an active-site residue.

Ca(2+) is required as a cofactor. In terms of tissue distribution, expressed by the venom gland.

It is found in the secreted. It catalyses the reaction a 1,2-diacyl-sn-glycero-3-phosphocholine + H2O = a 1-acyl-sn-glycero-3-phosphocholine + a fatty acid + H(+). Functionally, snake venom phospholipase A2 (PLA2) that shows a moderate inhibition of ADP-induced human platelet aggregation when tested on platelet rich plasma. Exhibits moderate hydrolytic activities and prefers the anionic micelles (dPPC with deoxycholate) to the zwitterionic micelles (dPPC with Triton X-100). PLA2 catalyzes the calcium-dependent hydrolysis of the 2-acyl groups in 3-sn-phosphoglycerides. The polypeptide is Acidic phospholipase A2 CTs-A3 (Trimeresurus stejnegeri (Chinese green tree viper)).